A 231-amino-acid polypeptide reads, in one-letter code: ATP phosphoribosyltransferase (231 aa).

The protein belongs to the ATP phosphoribosyltransferase family. Short subfamily. Heteromultimer composed of HisG and HisZ subunits.

It is found in the cytoplasm. It catalyses the reaction 1-(5-phospho-beta-D-ribosyl)-ATP + diphosphate = 5-phospho-alpha-D-ribose 1-diphosphate + ATP. It functions in the pathway amino-acid biosynthesis; L-histidine biosynthesis; L-histidine from 5-phospho-alpha-D-ribose 1-diphosphate: step 1/9. Its function is as follows. Catalyzes the condensation of ATP and 5-phosphoribose 1-diphosphate to form N'-(5'-phosphoribosyl)-ATP (PR-ATP). Has a crucial role in the pathway because the rate of histidine biosynthesis seems to be controlled primarily by regulation of HisG enzymatic activity. The protein is ATP phosphoribosyltransferase of Sinorhizobium medicae (strain WSM419) (Ensifer medicae).